The primary structure comprises 533 residues: Peptide chain release factor 3 (533 aa).

Residues A9 to L284 form the tr-type G domain. GTP contacts are provided by residues S18–T25, D95–H99, and N149–D152.

It belongs to the TRAFAC class translation factor GTPase superfamily. Classic translation factor GTPase family. PrfC subfamily.

The protein localises to the cytoplasm. Increases the formation of ribosomal termination complexes and stimulates activities of RF-1 and RF-2. It binds guanine nucleotides and has strong preference for UGA stop codons. It may interact directly with the ribosome. The stimulation of RF-1 and RF-2 is significantly reduced by GTP and GDP, but not by GMP. This Cupriavidus taiwanensis (strain DSM 17343 / BCRC 17206 / CCUG 44338 / CIP 107171 / LMG 19424 / R1) (Ralstonia taiwanensis (strain LMG 19424)) protein is Peptide chain release factor 3.